Reading from the N-terminus, the 328-residue chain is MALHDTYHDPVLAAEVVATLVQRSGIYVDGTLGGGSHSLALLQALQAQGLLESSLLIGIDQDSDALAMAAERLQAWQPYTRLLKGNFRDMASLVQQLCDAEGRACAVTGVLLDLGVSSFQLDTAERGFSYMRSGPLDMRMDNTAPLTAAELINHADEAELARIFYHYGEEPRSRALARAVVQQREKMGNFTTTEELAALVRRLTHGGEKAVIKTLSRLFQALRIAVNDELGALHEVLEGALELLDGNGRLAVMSYHSLEDRVVKHFFTHHAQCDWGPKGVALREPLSQGALTIVTKRPMLASADEIERNPRARSAKLRVAAKNQPKTI.

Residues 35 to 37 (GSH), D60, F87, D113, and Q120 each bind S-adenosyl-L-methionine.

This sequence belongs to the methyltransferase superfamily. RsmH family.

It localises to the cytoplasm. It carries out the reaction cytidine(1402) in 16S rRNA + S-adenosyl-L-methionine = N(4)-methylcytidine(1402) in 16S rRNA + S-adenosyl-L-homocysteine + H(+). In terms of biological role, specifically methylates the N4 position of cytidine in position 1402 (C1402) of 16S rRNA. This is Ribosomal RNA small subunit methyltransferase H from Chlorobium chlorochromatii (strain CaD3).